The sequence spans 351 residues: Uroporphyrinogen decarboxylase (351 aa).

Residues 25 to 29 (RQAGR), D74, Y151, S206, and H325 each bind substrate.

It belongs to the uroporphyrinogen decarboxylase family. In terms of assembly, homodimer.

Its subcellular location is the cytoplasm. It catalyses the reaction uroporphyrinogen III + 4 H(+) = coproporphyrinogen III + 4 CO2. Its pathway is porphyrin-containing compound metabolism; protoporphyrin-IX biosynthesis; coproporphyrinogen-III from 5-aminolevulinate: step 4/4. In terms of biological role, catalyzes the decarboxylation of four acetate groups of uroporphyrinogen-III to yield coproporphyrinogen-III. This is Uroporphyrinogen decarboxylase from Pelodictyon phaeoclathratiforme (strain DSM 5477 / BU-1).